The following is a 173-amino-acid chain: Myosin light chain 5 (173 aa).

Residues 1–22 (MASRKTKKKEGGGLRAQRASSN) form a disordered region. EF-hand domains lie at 30 to 65 (TQIQEFKEAFTLMDQNRDGFIDKEDLKDTYASLGKT), 100 to 135 (DAEETILNAFKMLDPEGKGSINKDYIKRLLMSQADK), and 136 to 171 (MTAEEVDQMFQFATIDAAGNLDYKALSYVLTHGEEK). Ca(2+) contacts are provided by Asp43, Asn45, Asp47, and Asp54.

Myosin is a hexamer of 2 heavy chains and 4 light chains. As to expression, jaw-closing muscles.

In Felis catus (Cat), this protein is Myosin light chain 5 (MYL5).